Consider the following 561-residue polypeptide: Potassium-transporting ATPase potassium-binding subunit (561 aa).

The next 12 membrane-spanning stretches (helical) occupy residues 2–22 (GLGLLQIGLTLCIVIAITPVL), 65–85 (YIRAILYTNLFMGILVYSLIH), 135–155 (ALGFLMFTSAATGLAVGIAFI), 177–197 (ILLPISVIGAIALVLLGVPQT), 253–273 (FIETIAMIAIPAAMIYTYGVF), 280–300 (AWLLFWMVFIVFVILVWVAAT), 327–347 (FGWAETALWAVMTTATMCGAV), 353–373 (ALMPQGLFATLFNLFLQIIWG), 378–398 (GTAYLFIYLILTVFLTGLMVG), 413–433 (IVLASLILLVHPIVVLIPSAI), 482–502 (LSTSLSILVGRYVPIIAMLLL), and 531–551 (AGIVLILGVLTFFPVLALGPI).

It belongs to the KdpA family. As to quaternary structure, the system is composed of three essential subunits: KdpA, KdpB and KdpC.

Its subcellular location is the cell membrane. In terms of biological role, part of the high-affinity ATP-driven potassium transport (or Kdp) system, which catalyzes the hydrolysis of ATP coupled with the electrogenic transport of potassium into the cytoplasm. This subunit binds the extracellular potassium ions and delivers the ions to the membrane domain of KdpB through an intramembrane tunnel. The protein is Potassium-transporting ATPase potassium-binding subunit of Anabaena sp. (strain L31).